We begin with the raw amino-acid sequence, 229 residues long: Peptidase E (229 aa).

Active-site charge relay system residues include S120, D135, and H157.

The protein belongs to the peptidase S51 family.

It localises to the cytoplasm. The enzyme catalyses Dipeptidase E catalyzes the hydrolysis of dipeptides Asp-|-Xaa. It does not act on peptides with N-terminal Glu, Asn or Gln, nor does it cleave isoaspartyl peptides.. Hydrolyzes dipeptides containing N-terminal aspartate residues. May play a role in allowing the cell to use peptide aspartate to spare carbon otherwise required for the synthesis of the aspartate family of amino acids. This Salmonella arizonae (strain ATCC BAA-731 / CDC346-86 / RSK2980) protein is Peptidase E.